A 162-amino-acid chain; its full sequence is Crossover junction endodeoxyribonuclease RuvC (162 aa).

Catalysis depends on residues Asp-7, Glu-67, and Asp-140. Asp-7, Glu-67, and Asp-140 together coordinate Mg(2+).

It belongs to the RuvC family. In terms of assembly, homodimer which binds Holliday junction (HJ) DNA. The HJ becomes 2-fold symmetrical on binding to RuvC with unstacked arms; it has a different conformation from HJ DNA in complex with RuvA. In the full resolvosome a probable DNA-RuvA(4)-RuvB(12)-RuvC(2) complex forms which resolves the HJ. Mg(2+) serves as cofactor.

The protein resides in the cytoplasm. The catalysed reaction is Endonucleolytic cleavage at a junction such as a reciprocal single-stranded crossover between two homologous DNA duplexes (Holliday junction).. Functionally, the RuvA-RuvB-RuvC complex processes Holliday junction (HJ) DNA during genetic recombination and DNA repair. Endonuclease that resolves HJ intermediates. Cleaves cruciform DNA by making single-stranded nicks across the HJ at symmetrical positions within the homologous arms, yielding a 5'-phosphate and a 3'-hydroxyl group; requires a central core of homology in the junction. The consensus cleavage sequence is 5'-(A/T)TT(C/G)-3'. Cleavage occurs on the 3'-side of the TT dinucleotide at the point of strand exchange. HJ branch migration catalyzed by RuvA-RuvB allows RuvC to scan DNA until it finds its consensus sequence, where it cleaves and resolves the cruciform DNA. The protein is Crossover junction endodeoxyribonuclease RuvC of Wolinella succinogenes (strain ATCC 29543 / DSM 1740 / CCUG 13145 / JCM 31913 / LMG 7466 / NCTC 11488 / FDC 602W) (Vibrio succinogenes).